The following is a 359-amino-acid chain: MFDKLQAAEDRYEEISHKLSDPDVINNQDEYKKYMKECSDLEEIVQKYREYTKVTKEIEEARELLEQTLDKDFREMVQQEFQEAQEKLEVIKRQLKILIVPKDPNDDKNVIVEIRGGAGGEEAALFAGVLFRAMAKYAEKKRWKYEILDSNPTELGGFKEVVFTIEGKGAYSRLKFESGVHRVQRVPSTESSGRIHTSTITVAVLPEVEEVDVDINPSDLRIDTYRASGAGGQHINKTDSAIRITHMPTGIVVSCQDERSQHKNKDKAMKILRSKLYEIAQEQQINEVAQDRKNQVGTGDRSERIRTYNYPQGRVTDHRINLTLYKLEQVLDGDLDELIDALITTDQSEKLGSGSDDEG.

An N5-methylglutamine modification is found at Q233.

Belongs to the prokaryotic/mitochondrial release factor family. In terms of processing, methylated by PrmC. Methylation increases the termination efficiency of RF1.

The protein localises to the cytoplasm. Peptide chain release factor 1 directs the termination of translation in response to the peptide chain termination codons UAG and UAA. The polypeptide is Peptide chain release factor 1 (Ruminiclostridium cellulolyticum (strain ATCC 35319 / DSM 5812 / JCM 6584 / H10) (Clostridium cellulolyticum)).